Consider the following 344-residue polypeptide: S-adenosylmethionine:tRNA ribosyltransferase-isomerase (344 aa).

This sequence belongs to the QueA family. Monomer.

Its subcellular location is the cytoplasm. The catalysed reaction is 7-aminomethyl-7-carbaguanosine(34) in tRNA + S-adenosyl-L-methionine = epoxyqueuosine(34) in tRNA + adenine + L-methionine + 2 H(+). It participates in tRNA modification; tRNA-queuosine biosynthesis. Its function is as follows. Transfers and isomerizes the ribose moiety from AdoMet to the 7-aminomethyl group of 7-deazaguanine (preQ1-tRNA) to give epoxyqueuosine (oQ-tRNA). The polypeptide is S-adenosylmethionine:tRNA ribosyltransferase-isomerase (Heliobacterium modesticaldum (strain ATCC 51547 / Ice1)).